The following is a 687-amino-acid chain: Putative lipase YDR444W (687 aa).

Serine 284 functions as the Charge relay system in the catalytic mechanism. Disordered regions lie at residues 429–472 (IRKK…AESP), 491–513 (KINK…EQGV), and 650–687 (ELAE…ENAT). Positions 436-463 (SPTSSEFVSSDSPESSGASSPSNENGNN) are enriched in low complexity. Residues 670-681 (RSNEYNEGEISK) show a composition bias toward basic and acidic residues.

It belongs to the putative lipase ROG1 family.

The protein resides in the cytoplasm. This chain is Putative lipase YDR444W, found in Saccharomyces cerevisiae (strain ATCC 204508 / S288c) (Baker's yeast).